Consider the following 129-residue polypeptide: Flagellar assembly factor FliW 2 (129 aa).

Belongs to the FliW family. As to quaternary structure, interacts with translational regulator CsrA and flagellin(s).

It localises to the cytoplasm. In terms of biological role, acts as an anti-CsrA protein, binds CsrA and prevents it from repressing translation of its target genes, one of which is flagellin. Binds to flagellin and participates in the assembly of the flagellum. The polypeptide is Flagellar assembly factor FliW 2 (Helicobacter pylori (strain HPAG1)).